The sequence spans 354 residues: Molybdenum import ATP-binding protein ModC (354 aa).

Residues 1–229 (MLELDFEQQL…SALRLWLQKE (229 aa)) form the ABC transporter domain. 31–38 (GLSGAGKT) contacts ATP. Residues 289–354 (GSSIRNILAV…IKSVSFHRQL (66 aa)) enclose the Mop domain.

The protein belongs to the ABC transporter superfamily. Molybdate importer (TC 3.A.1.8) family. As to quaternary structure, the complex is composed of two ATP-binding proteins (ModC), two transmembrane proteins (ModB) and a solute-binding protein (ModA).

Its subcellular location is the cell inner membrane. The enzyme catalyses molybdate(out) + ATP + H2O = molybdate(in) + ADP + phosphate + H(+). Its function is as follows. Part of the ABC transporter complex ModABC involved in molybdenum import. Responsible for energy coupling to the transport system. The chain is Molybdenum import ATP-binding protein ModC from Photorhabdus laumondii subsp. laumondii (strain DSM 15139 / CIP 105565 / TT01) (Photorhabdus luminescens subsp. laumondii).